Here is a 95-residue protein sequence, read N- to C-terminus: Aspartyl/glutamyl-tRNA(Asn/Gln) amidotransferase subunit C (95 aa).

Belongs to the GatC family. In terms of assembly, heterotrimer of A, B and C subunits.

The enzyme catalyses L-glutamyl-tRNA(Gln) + L-glutamine + ATP + H2O = L-glutaminyl-tRNA(Gln) + L-glutamate + ADP + phosphate + H(+). It carries out the reaction L-aspartyl-tRNA(Asn) + L-glutamine + ATP + H2O = L-asparaginyl-tRNA(Asn) + L-glutamate + ADP + phosphate + 2 H(+). In terms of biological role, allows the formation of correctly charged Asn-tRNA(Asn) or Gln-tRNA(Gln) through the transamidation of misacylated Asp-tRNA(Asn) or Glu-tRNA(Gln) in organisms which lack either or both of asparaginyl-tRNA or glutaminyl-tRNA synthetases. The reaction takes place in the presence of glutamine and ATP through an activated phospho-Asp-tRNA(Asn) or phospho-Glu-tRNA(Gln). This Sinorhizobium fredii (strain NBRC 101917 / NGR234) protein is Aspartyl/glutamyl-tRNA(Asn/Gln) amidotransferase subunit C.